Reading from the N-terminus, the 124-residue chain is Ribonuclease pancreatic (124 aa).

Residues 1–24 (KETAAAKFQRQHMDSSTSSASSSN) are disordered. Positions 7 and 10 each coordinate substrate. The Proton acceptor role is filled by histidine 12. Cystine bridges form between cysteine 26/cysteine 84, cysteine 40/cysteine 95, cysteine 58/cysteine 110, and cysteine 65/cysteine 72. Asparagine 34 carries an N-linked (GlcNAc...) asparagine; in river-breed only glycan. Substrate is bound by residues 41-45 (KPVNT), lysine 66, and arginine 85. The Proton donor role is filled by histidine 119.

Belongs to the pancreatic ribonuclease family. As to quaternary structure, monomer. Interacts with and forms tight 1:1 complexes with RNH1. Dimerization of two such complexes may occur. Interaction with RNH1 inhibits this protein. Swamp breed ribonuclease do not bind carbohydrate, but there is evidence of a polymorphic form that does. Pancreas.

The protein resides in the secreted. It catalyses the reaction an [RNA] containing cytidine + H2O = an [RNA]-3'-cytidine-3'-phosphate + a 5'-hydroxy-ribonucleotide-3'-[RNA].. It carries out the reaction an [RNA] containing uridine + H2O = an [RNA]-3'-uridine-3'-phosphate + a 5'-hydroxy-ribonucleotide-3'-[RNA].. Its function is as follows. Endonuclease that catalyzes the cleavage of RNA on the 3' side of pyrimidine nucleotides. Acts on single-stranded and double-stranded RNA. The polypeptide is Ribonuclease pancreatic (RNASE1) (Bubalus bubalis (Domestic water buffalo)).